The following is an 834-amino-acid chain: Protein translocase subunit SecA (834 aa).

ATP contacts are provided by residues Q85, 103–107 (GEGKT), and D491. The segment at 790–809 (RETSTNINDGEGGSHEPIKR) is disordered. Zn(2+) is bound by residues C820, C822, C831, and C832.

The protein belongs to the SecA family. Monomer and homodimer. Part of the essential Sec protein translocation apparatus which comprises SecA, SecYEG and auxiliary proteins SecDF. Other proteins may also be involved. Zn(2+) serves as cofactor.

The protein resides in the cell membrane. Its subcellular location is the cytoplasm. The catalysed reaction is ATP + H2O + cellular proteinSide 1 = ADP + phosphate + cellular proteinSide 2.. Functionally, part of the Sec protein translocase complex. Interacts with the SecYEG preprotein conducting channel. Has a central role in coupling the hydrolysis of ATP to the transfer of proteins into and across the cell membrane, serving as an ATP-driven molecular motor driving the stepwise translocation of polypeptide chains across the membrane. The sequence is that of Protein translocase subunit SecA from Clostridium novyi (strain NT).